The chain runs to 441 residues: Histidinol dehydrogenase (441 aa).

3 residues coordinate NAD(+): Y136, Q197, and N220. S243, Q265, and H268 together coordinate substrate. The Zn(2+) site is built by Q265 and H268. Residues E333 and H334 each act as proton acceptor in the active site. Residues H334, D367, E421, and H426 each coordinate substrate. Residue D367 coordinates Zn(2+). A Zn(2+)-binding site is contributed by H426.

This sequence belongs to the histidinol dehydrogenase family. The cofactor is Zn(2+).

It carries out the reaction L-histidinol + 2 NAD(+) + H2O = L-histidine + 2 NADH + 3 H(+). It participates in amino-acid biosynthesis; L-histidine biosynthesis; L-histidine from 5-phospho-alpha-D-ribose 1-diphosphate: step 9/9. In terms of biological role, catalyzes the sequential NAD-dependent oxidations of L-histidinol to L-histidinaldehyde and then to L-histidine. The chain is Histidinol dehydrogenase from Pseudomonas putida (strain ATCC 47054 / DSM 6125 / CFBP 8728 / NCIMB 11950 / KT2440).